Reading from the N-terminus, the 406-residue chain is Glutamyl-tRNA reductase (406 aa).

Substrate contacts are provided by residues 49 to 52 (TCHR), S107, 112 to 114 (EPQ), and Q118. C50 (nucleophile) is an active-site residue. An NADP(+)-binding site is contributed by 187 to 192 (GAGETG).

It belongs to the glutamyl-tRNA reductase family. As to quaternary structure, homodimer.

It catalyses the reaction (S)-4-amino-5-oxopentanoate + tRNA(Glu) + NADP(+) = L-glutamyl-tRNA(Glu) + NADPH + H(+). Its pathway is porphyrin-containing compound metabolism; protoporphyrin-IX biosynthesis; 5-aminolevulinate from L-glutamyl-tRNA(Glu): step 1/2. Its function is as follows. Catalyzes the NADPH-dependent reduction of glutamyl-tRNA(Glu) to glutamate 1-semialdehyde (GSA). The sequence is that of Glutamyl-tRNA reductase from Thermomicrobium roseum (strain ATCC 27502 / DSM 5159 / P-2).